The chain runs to 195 residues: Pyridoxal 5'-phosphate synthase subunit PdxT (195 aa).

Residue 55-57 (GES) coordinates L-glutamine. Cysteine 84 functions as the Nucleophile in the catalytic mechanism. Residues arginine 111 and 139–140 (IR) contribute to the L-glutamine site. Residues histidine 175 and glutamate 177 each act as charge relay system in the active site.

This sequence belongs to the glutaminase PdxT/SNO family. In the presence of PdxS, forms a dodecamer of heterodimers. Only shows activity in the heterodimer.

It carries out the reaction aldehydo-D-ribose 5-phosphate + D-glyceraldehyde 3-phosphate + L-glutamine = pyridoxal 5'-phosphate + L-glutamate + phosphate + 3 H2O + H(+). It catalyses the reaction L-glutamine + H2O = L-glutamate + NH4(+). It functions in the pathway cofactor biosynthesis; pyridoxal 5'-phosphate biosynthesis. Its function is as follows. Catalyzes the hydrolysis of glutamine to glutamate and ammonia as part of the biosynthesis of pyridoxal 5'-phosphate. The resulting ammonia molecule is channeled to the active site of PdxS. This chain is Pyridoxal 5'-phosphate synthase subunit PdxT, found in Methanosphaerula palustris (strain ATCC BAA-1556 / DSM 19958 / E1-9c).